Reading from the N-terminus, the 299-residue chain is MLFNQIASNKRKTIVLLIVFFMLLAAIGAAVGYLWLDSLVGGMAIALIIGFIYAFSMIFQSTNIVMAMNNAKEITVDEMPDYYHIVEDMAMVAQIPMPRVYVIDDPSLNAFATGSSPQNAAVAATTGLLAIMNREELEGVIGHEVSHIRNYDIRISTIAVALASAVTLISSIGGRMMWFGGGRSRRSNDNEGGGYLQIILLIFSLLAIILAPLAASLVQLAISRQREYLADASSVELTRNPQGMIRALQKLEQSQPMAHSVDNASAALYINDPKKKSGLKHLFYTHPPIADRIRRLEQV.

2 helical membrane-spanning segments follow: residues Ile-14–Leu-34 and Leu-39–Phe-59. Position 143 (His-143) interacts with Zn(2+). Glu-144 is a catalytic residue. A Zn(2+)-binding site is contributed by His-147. 2 helical membrane passes run Ile-158–Trp-178 and Ile-198–Val-218. Glu-227 is a binding site for Zn(2+).

The protein belongs to the peptidase M48B family. Zn(2+) serves as cofactor.

Its subcellular location is the cell membrane. This Streptococcus mutans serotype c (strain ATCC 700610 / UA159) protein is Protease HtpX homolog.